A 70-amino-acid polypeptide reads, in one-letter code: VLIIAVLFLTACQLTTAETSSRGKQKHRALRSTDKNSKLTRGCTPPGGACGGHAHCCSQSCNILASTCNA.

Residues 1–17 form the signal peptide; it reads VLIIAVLFLTACQLTTA. The propeptide occupies 18–41; the sequence is ETSSRGKQKHRALRSTDKNSKLTR. Positions 19-41 are disordered; it reads TSSRGKQKHRALRSTDKNSKLTR. Cystine bridges form between Cys43-Cys57, Cys50-Cys61, and Cys56-Cys68.

The protein belongs to the conotoxin O1 superfamily. As to expression, expressed by the venom duct.

Its subcellular location is the secreted. The sequence is that of Conotoxin AbVIC from Conus abbreviatus (Abbreviated cone).